Reading from the N-terminus, the 479-residue chain is MTFKRIASSIQQDRLSNLPDVLLIMIISCLSFKECIRTSVLAKRWRYLCRETRNISFKETEYVDHFVSDKRSKRVSFAAYMCQWVSRYHGRYIETLEIYFSIPSDFLAAVESLIEFAVSRQVKNLVLDFSDPSWISTSCASRYDYVCVQLPVCVYSLTTLESLKIYSCGFDPSKFSNSRLPRKLSIGWIKLTDVESLLLNSPTLKSLSINYCWGIEIRNIAGDMKEFVFESCDFSSFMVCCFDLPNVEIFKYSGQILSFDVKRMNMSIKDVILDFTAEGLYEDRNQRTKLEGSVLSAFLNNLRGARTLSVCPYLLQTIQECEDPFDLLRPMETQHLVLRTRLHVMEFKGIKLLLDNCPNLETLTFDIFSRSLFSYNKSYYGVGPRSYWKKNLTYKSLPKTLKVVVVRNFTGRFGELNVLKFLIQSGRGRWPGREHGPMLERVELYMDSSMAESQKELADDGAMMLQSISGDVQVLVYDP.

An F-box domain is found at Q12–T60. LRR repeat units follow at residues Y99 to F129, C139 to S167, I186 to Y211, V228 to G254, R287 to P312, L342 to I367, and L419 to M446.

This chain is Putative F-box/LRR-repeat protein At1g56400, found in Arabidopsis thaliana (Mouse-ear cress).